Here is a 387-residue protein sequence, read N- to C-terminus: MTFTAPLQKDAIRIMLLGSGELGKEVAIEAQRLGIEVIAVDKYENAPAHLVANRSYAIDMQDKSAVLELIEKEQPSYILPEVEAISISALFEAEKRGFHVIPNAEAVNKTMNRKNIRVFAAETLDLKTSGYEFVTTLDGLKAAGERIGFPCVIKPVMSSSGHGQSIAKTANDIERSWEIAKEARGDASELIVEEFVPFDYEITLLTVRNETGTTFCEPIGHVQKDGDFILSWQPMQMSPEALKKAQEIAKAVTDGLGGRGIFGVEFFVKDEEVYFSELSPRPHDTGMVTLITQSQSEFALHVRAVLGLPLDFTFYGAGACGAYKAKNESHNPVLEIPDDAFTKDSFVRVFGKPESHVGRRMAVSLVLDEVKEAKRRATEIVETIDDH.

N(1)-(5-phospho-beta-D-ribosyl)glycinamide is bound by residues 21 to 22 (EL) and Glu-81. Residues Arg-113, Lys-154, 159–164 (SSGHGQ), 193–196 (EEFV), and Glu-201 contribute to the ATP site. The 189-residue stretch at 118-306 (VFAAETLDLK…EFALHVRAVL (189 aa)) folds into the ATP-grasp domain. Residues Glu-265 and Glu-277 each coordinate Mg(2+). N(1)-(5-phospho-beta-D-ribosyl)glycinamide-binding positions include Asp-284, Lys-352, and 359 to 360 (RR).

This sequence belongs to the PurK/PurT family. In terms of assembly, homodimer.

It catalyses the reaction N(1)-(5-phospho-beta-D-ribosyl)glycinamide + formate + ATP = N(2)-formyl-N(1)-(5-phospho-beta-D-ribosyl)glycinamide + ADP + phosphate + H(+). The protein operates within purine metabolism; IMP biosynthesis via de novo pathway; N(2)-formyl-N(1)-(5-phospho-D-ribosyl)glycinamide from N(1)-(5-phospho-D-ribosyl)glycinamide (formate route): step 1/1. In terms of biological role, involved in the de novo purine biosynthesis. Catalyzes the transfer of formate to 5-phospho-ribosyl-glycinamide (GAR), producing 5-phospho-ribosyl-N-formylglycinamide (FGAR). Formate is provided by PurU via hydrolysis of 10-formyl-tetrahydrofolate. The polypeptide is Formate-dependent phosphoribosylglycinamide formyltransferase (Sulfurovum sp. (strain NBC37-1)).